A 689-amino-acid chain; its full sequence is tRNA 5-methylaminomethyl-2-thiouridine biosynthesis bifunctional protein MnmC (689 aa).

The interval 1–245 (MNQRPIQTAT…KREMLTGTLP (245 aa)) is tRNA (mnm(5)s(2)U34)-methyltransferase. The interval 270-689 (IGGGIVSALT…RSPATQESSR (420 aa)) is FAD-dependent cmnm(5)s(2)U34 oxidoreductase.

The protein in the N-terminal section; belongs to the methyltransferase superfamily. tRNA (mnm(5)s(2)U34)-methyltransferase family. This sequence in the C-terminal section; belongs to the DAO family. It depends on FAD as a cofactor.

It is found in the cytoplasm. The catalysed reaction is 5-aminomethyl-2-thiouridine(34) in tRNA + S-adenosyl-L-methionine = 5-methylaminomethyl-2-thiouridine(34) in tRNA + S-adenosyl-L-homocysteine + H(+). In terms of biological role, catalyzes the last two steps in the biosynthesis of 5-methylaminomethyl-2-thiouridine (mnm(5)s(2)U) at the wobble position (U34) in tRNA. Catalyzes the FAD-dependent demodification of cmnm(5)s(2)U34 to nm(5)s(2)U34, followed by the transfer of a methyl group from S-adenosyl-L-methionine to nm(5)s(2)U34, to form mnm(5)s(2)U34. The chain is tRNA 5-methylaminomethyl-2-thiouridine biosynthesis bifunctional protein MnmC from Yersinia pseudotuberculosis serotype I (strain IP32953).